A 607-amino-acid chain; its full sequence is Elongation factor 4 (607 aa).

Residues 11-193 (EKIRNFSIIA…QIVEKVPAPT (183 aa)) enclose the tr-type G domain. GTP-binding positions include 23-28 (DHGKST) and 140-143 (NKID).

Belongs to the TRAFAC class translation factor GTPase superfamily. Classic translation factor GTPase family. LepA subfamily.

The protein localises to the cell membrane. The enzyme catalyses GTP + H2O = GDP + phosphate + H(+). In terms of biological role, required for accurate and efficient protein synthesis under certain stress conditions. May act as a fidelity factor of the translation reaction, by catalyzing a one-codon backward translocation of tRNAs on improperly translocated ribosomes. Back-translocation proceeds from a post-translocation (POST) complex to a pre-translocation (PRE) complex, thus giving elongation factor G a second chance to translocate the tRNAs correctly. Binds to ribosomes in a GTP-dependent manner. The chain is Elongation factor 4 from Streptococcus pneumoniae serotype 19F (strain G54).